The sequence spans 155 residues: DNA gyrase inhibitor (155 aa).

This sequence belongs to the DNA gyrase inhibitor family. Interacts with DNA gyrase.

The protein localises to the cytoplasm. Inhibits the supercoiling activity of DNA gyrase. Acts by inhibiting DNA gyrase at an early step, prior to (or at the step of) binding of DNA by the gyrase. It protects cells against toxins that target DNA gyrase, by inhibiting activity of these toxins and reducing the formation of lethal double-strand breaks in the cell. The polypeptide is DNA gyrase inhibitor (Salmonella typhi).